Here is a 579-residue protein sequence, read N- to C-terminus: 2-succinyl-5-enolpyruvyl-6-hydroxy-3-cyclohexene-1-carboxylate synthase (579 aa).

It belongs to the TPP enzyme family. MenD subfamily. Homodimer. The cofactor is Mg(2+). Requires Mn(2+) as cofactor. It depends on thiamine diphosphate as a cofactor.

It catalyses the reaction isochorismate + 2-oxoglutarate + H(+) = 5-enolpyruvoyl-6-hydroxy-2-succinyl-cyclohex-3-ene-1-carboxylate + CO2. The protein operates within quinol/quinone metabolism; 1,4-dihydroxy-2-naphthoate biosynthesis; 1,4-dihydroxy-2-naphthoate from chorismate: step 2/7. It participates in quinol/quinone metabolism; menaquinone biosynthesis. In terms of biological role, catalyzes the thiamine diphosphate-dependent decarboxylation of 2-oxoglutarate and the subsequent addition of the resulting succinic semialdehyde-thiamine pyrophosphate anion to isochorismate to yield 2-succinyl-5-enolpyruvyl-6-hydroxy-3-cyclohexene-1-carboxylate (SEPHCHC). This Shewanella frigidimarina (strain NCIMB 400) protein is 2-succinyl-5-enolpyruvyl-6-hydroxy-3-cyclohexene-1-carboxylate synthase.